A 332-amino-acid polypeptide reads, in one-letter code: 2,3-diketo-L-gulonate reductase (332 aa).

H44 serves as the catalytic Proton donor. Residues 168–174 (ITMIDMS), 224–225 (WK), and 304–306 (GHE) contribute to the NAD(+) site.

Belongs to the LDH2/MDH2 oxidoreductase family. DlgD subfamily. As to quaternary structure, homodimer.

It is found in the cytoplasm. The catalysed reaction is 3-dehydro-L-gulonate + NAD(+) = 2,3-dioxo-L-gulonate + NADH + H(+). It carries out the reaction 3-dehydro-L-gulonate + NADP(+) = 2,3-dioxo-L-gulonate + NADPH + H(+). Catalyzes the reduction of 2,3-diketo-L-gulonate in the presence of NADH, to form 3-keto-L-gulonate. In Citrobacter koseri (strain ATCC BAA-895 / CDC 4225-83 / SGSC4696), this protein is 2,3-diketo-L-gulonate reductase.